We begin with the raw amino-acid sequence, 95 residues long: Aspartyl/glutamyl-tRNA(Asn/Gln) amidotransferase subunit C (95 aa).

This sequence belongs to the GatC family. As to quaternary structure, heterotrimer of A, B and C subunits.

It catalyses the reaction L-glutamyl-tRNA(Gln) + L-glutamine + ATP + H2O = L-glutaminyl-tRNA(Gln) + L-glutamate + ADP + phosphate + H(+). The enzyme catalyses L-aspartyl-tRNA(Asn) + L-glutamine + ATP + H2O = L-asparaginyl-tRNA(Asn) + L-glutamate + ADP + phosphate + 2 H(+). Allows the formation of correctly charged Asn-tRNA(Asn) or Gln-tRNA(Gln) through the transamidation of misacylated Asp-tRNA(Asn) or Glu-tRNA(Gln) in organisms which lack either or both of asparaginyl-tRNA or glutaminyl-tRNA synthetases. The reaction takes place in the presence of glutamine and ATP through an activated phospho-Asp-tRNA(Asn) or phospho-Glu-tRNA(Gln). In Methylorubrum extorquens (strain CM4 / NCIMB 13688) (Methylobacterium extorquens), this protein is Aspartyl/glutamyl-tRNA(Asn/Gln) amidotransferase subunit C.